The primary structure comprises 281 residues: MEIFNTVASLKNFVAHARAERKTIGLVPTMGALHRGHISLIHRAVAECDICVASVFVNPTQFNDKRDLECYPRTPEADAAVLAEAGCHAVFMPSVEEVYPEPDTRVFDLGSVAEVMEGKHRPGHFNGVAQVVSKLFMMVEPDKAYFGEKDFQQIAVIRSMVNLLGLPVTIVACPIIREEDGLALSSRNVRLGSEERAIAPSIARILGQSRTLRPAHTPEAVTRWVTESLNALPHLQVEYFEIVDGNSLQRIDNWQDTDHAVGCITVYCGEVRLIDNIKYED.

30 to 37 (MGALHRGH) is a binding site for ATP. H37 serves as the catalytic Proton donor. Residue Q61 coordinates (R)-pantoate. Residue Q61 participates in beta-alanine binding. 147–150 (GEKD) contributes to the ATP binding site. Q153 contributes to the (R)-pantoate binding site. Residues I176 and 184-187 (LSSR) contribute to the ATP site.

The protein belongs to the pantothenate synthetase family. As to quaternary structure, homodimer.

The protein resides in the cytoplasm. It catalyses the reaction (R)-pantoate + beta-alanine + ATP = (R)-pantothenate + AMP + diphosphate + H(+). It participates in cofactor biosynthesis; (R)-pantothenate biosynthesis; (R)-pantothenate from (R)-pantoate and beta-alanine: step 1/1. In terms of biological role, catalyzes the condensation of pantoate with beta-alanine in an ATP-dependent reaction via a pantoyl-adenylate intermediate. The sequence is that of Pantothenate synthetase from Porphyromonas gingivalis (strain ATCC 33277 / DSM 20709 / CIP 103683 / JCM 12257 / NCTC 11834 / 2561).